We begin with the raw amino-acid sequence, 712 residues long: Polyribonucleotide nucleotidyltransferase (712 aa).

2 residues coordinate Mg(2+): Asp-485 and Asp-491. The region spanning 552-611 is the KH domain; sequence PRIHTMKIDPKKIKDVIGKGGAVIRSLTEETGTSIDIDDDGTVKIAATDNNAAKMVMSRI. The S1 motif domain maps to 621–689; that stretch reads NAIYTGKVSR…RQNRIRLTMK (69 aa).

It belongs to the polyribonucleotide nucleotidyltransferase family. In terms of assembly, component of the RNA degradosome, which is a multiprotein complex involved in RNA processing and mRNA degradation. Requires Mg(2+) as cofactor.

Its subcellular location is the cytoplasm. The catalysed reaction is RNA(n+1) + phosphate = RNA(n) + a ribonucleoside 5'-diphosphate. Its function is as follows. Involved in mRNA degradation. Catalyzes the phosphorolysis of single-stranded polyribonucleotides processively in the 3'- to 5'-direction. This is Polyribonucleotide nucleotidyltransferase from Haemophilus ducreyi (strain 35000HP / ATCC 700724).